The following is a 399-amino-acid chain: Accessory Sec system protein translocase subunit SecY2 (399 aa).

10 consecutive transmembrane segments (helical) span residues 14 to 34, 60 to 80, 102 to 122, 128 to 148, 152 to 172, 184 to 204, 238 to 258, 272 to 292, 335 to 355, and 362 to 382; these read ILFT…SIVG, LNVF…IMLL, IITI…YIHN, SNII…VWLA, ITYG…KSLF, VLLL…LLFI, ISIM…NLIA, FANP…SYLL, WTGA…TLLV, and IYFS…GETI.

The protein belongs to the SecY/SEC61-alpha family. SecY2 subfamily. In terms of assembly, component of the accessory SecA2/SecY2 protein translocase complex required to export cell wall proteins. May form heterotrimers with SecE and SecG subunits.

The protein localises to the cell membrane. In terms of biological role, part of the accessory SecA2/SecY2 system specifically required for export of possible cell wall proteins. The central subunit of a protein translocation channel. The polypeptide is Accessory Sec system protein translocase subunit SecY2 (Staphylococcus haemolyticus (strain JCSC1435)).